A 110-amino-acid polypeptide reads, in one-letter code: Large ribosomal subunit protein uL24 (110 aa).

It belongs to the universal ribosomal protein uL24 family. As to quaternary structure, part of the 50S ribosomal subunit.

Its function is as follows. One of two assembly initiator proteins, it binds directly to the 5'-end of the 23S rRNA, where it nucleates assembly of the 50S subunit. In terms of biological role, one of the proteins that surrounds the polypeptide exit tunnel on the outside of the subunit. The chain is Large ribosomal subunit protein uL24 from Roseiflexus sp. (strain RS-1).